A 379-amino-acid polypeptide reads, in one-letter code: Cytochrome b (379 aa).

Transmembrane regions (helical) follow at residues 33-53, 77-98, 113-133, and 178-198; these read FGSL…FLAM, WLIR…YLHI, WNIG…GYVL, and FFAF…LHLL. Residues H83 and H97 each coordinate heme b. Heme b contacts are provided by H182 and H196. H201 is a binding site for a ubiquinone. 4 consecutive transmembrane segments (helical) span residues 226 to 246, 288 to 308, 320 to 340, and 347 to 367; these read YKDL…ALFY, LGGV…PILH, ASQL…WIGG, and YIII…VLNP.

This sequence belongs to the cytochrome b family. The cytochrome bc1 complex contains 3 respiratory subunits (MT-CYB, CYC1 and UQCRFS1), 2 core proteins (UQCRC1 and UQCRC2) and probably 6 low-molecular weight proteins. Requires heme b as cofactor.

Its subcellular location is the mitochondrion inner membrane. In terms of biological role, component of the ubiquinol-cytochrome c reductase complex (complex III or cytochrome b-c1 complex) that is part of the mitochondrial respiratory chain. The b-c1 complex mediates electron transfer from ubiquinol to cytochrome c. Contributes to the generation of a proton gradient across the mitochondrial membrane that is then used for ATP synthesis. In Anguilla rostrata (American eel), this protein is Cytochrome b (mt-cyb).